The sequence spans 286 residues: Ferric acinetobactin reductase (286 aa).

Residues 25–131 form the FAD-binding FR-type domain; sequence MEQLEMTIVS…IGPRPHFIPN (107 aa). Positions 79, 80, 82, 96, 98, 100, 102, 104, 106, 250, 252, and 255 each coordinate FAD.

This sequence belongs to the SIP oxidoreductase family. As to quaternary structure, monomer in solution. FAD is required as a cofactor.

It carries out the reaction 2 a Fe(II)-siderophore + NAD(+) + H(+) = 2 a Fe(III)-siderophore + NADH. The enzyme catalyses 2 a Fe(II)-siderophore + NADP(+) + H(+) = 2 a Fe(III)-siderophore + NADPH. In terms of biological role, ferric-siderophore reductase involved in iron removal from the siderophores after their transport into the cell. Interacts with the siderophores acinetobactin (Acb) and preacinetobactin (pre-Acb) and catalyzes the reduction of the ferric iron bound to the siderophores to ferrous iron, resulting in destabilization of the siderophore chelation complex and entrance of ferrous iron into the intracellular pool of bioavailable metals. Can use NADH and NADPH as electron donors in vitro, but the reduction rate is very slow, suggesting that NADH and NADPH are not the physiological partners of BauF. This is Ferric acinetobactin reductase from Acinetobacter baumannii.